The primary structure comprises 413 residues: Multifunctional CCA protein (413 aa).

Glycine 8 and arginine 11 together coordinate ATP. Residues glycine 8 and arginine 11 each contribute to the CTP site. Residues aspartate 21 and aspartate 23 each coordinate Mg(2+). The ATP site is built by arginine 91, arginine 141, and arginine 144. 3 residues coordinate CTP: arginine 91, arginine 141, and arginine 144. Residues 230-331 form the HD domain; sequence TGAHLLLVLD…VRLLERCDAL (102 aa).

Belongs to the tRNA nucleotidyltransferase/poly(A) polymerase family. Bacterial CCA-adding enzyme type 1 subfamily. As to quaternary structure, monomer. Can also form homodimers and oligomers. It depends on Mg(2+) as a cofactor. Requires Ni(2+) as cofactor.

The catalysed reaction is a tRNA precursor + 2 CTP + ATP = a tRNA with a 3' CCA end + 3 diphosphate. The enzyme catalyses a tRNA with a 3' CCA end + 2 CTP + ATP = a tRNA with a 3' CCACCA end + 3 diphosphate. In terms of biological role, catalyzes the addition and repair of the essential 3'-terminal CCA sequence in tRNAs without using a nucleic acid template. Adds these three nucleotides in the order of C, C, and A to the tRNA nucleotide-73, using CTP and ATP as substrates and producing inorganic pyrophosphate. tRNA 3'-terminal CCA addition is required both for tRNA processing and repair. Also involved in tRNA surveillance by mediating tandem CCA addition to generate a CCACCA at the 3' terminus of unstable tRNAs. While stable tRNAs receive only 3'-terminal CCA, unstable tRNAs are marked with CCACCA and rapidly degraded. This Verminephrobacter eiseniae (strain EF01-2) protein is Multifunctional CCA protein.